We begin with the raw amino-acid sequence, 241 residues long: Ribosomal RNA large subunit methyltransferase E (241 aa).

S-adenosyl-L-methionine is bound by residues glycine 88, tryptophan 90, aspartate 111, aspartate 127, and aspartate 151. Lysine 191 serves as the catalytic Proton acceptor.

This sequence belongs to the class I-like SAM-binding methyltransferase superfamily. RNA methyltransferase RlmE family.

Its subcellular location is the cytoplasm. The catalysed reaction is uridine(2552) in 23S rRNA + S-adenosyl-L-methionine = 2'-O-methyluridine(2552) in 23S rRNA + S-adenosyl-L-homocysteine + H(+). Functionally, specifically methylates the uridine in position 2552 of 23S rRNA at the 2'-O position of the ribose in the fully assembled 50S ribosomal subunit. This is Ribosomal RNA large subunit methyltransferase E from Bartonella quintana (strain Toulouse) (Rochalimaea quintana).